The primary structure comprises 534 residues: GTPase Obg (534 aa).

An Obg domain is found at 2 to 159; it reads ASFVDRVVLH…SDIVLELKSI (158 aa). Residues 63-82 are disordered; the sequence is APHRHASNGGQGMGDWRGGK. Residues 71 to 82 show a composition bias toward gly residues; that stretch reads GGQGMGDWRGGK. The OBG-type G domain occupies 160–343; sequence ADIALVGFPS…LSFAMAELVT (184 aa). GTP contacts are provided by residues 166-173, 191-195, 212-215, 295-298, and 324-326; these read GFPSAGKS, FTTLI, DVPG, NKID, and SAS. The Mg(2+) site is built by Ser-173 and Thr-193. In terms of domain architecture, OCT spans 363-449; sequence PRAVNRKEFT…ENAVVFDWEP (87 aa). Positions 456–534 are disordered; that stretch reads ELLSGPRGTD…AASTDDGDAL (79 aa). 2 stretches are compositionally biased toward basic and acidic residues: residues 464-504 and 512-526; these read TDPR…ERKA and SARRDREAHESREAA.

The protein belongs to the TRAFAC class OBG-HflX-like GTPase superfamily. OBG GTPase family. Monomer. Requires Mg(2+) as cofactor.

Its subcellular location is the cytoplasm. Its function is as follows. An essential GTPase which binds GTP, GDP and possibly (p)ppGpp with moderate affinity, with high nucleotide exchange rates and a fairly low GTP hydrolysis rate. Plays a role in control of the cell cycle, stress response, ribosome biogenesis and in those bacteria that undergo differentiation, in morphogenesis control. The sequence is that of GTPase Obg from Renibacterium salmoninarum (strain ATCC 33209 / DSM 20767 / JCM 11484 / NBRC 15589 / NCIMB 2235).